A 285-amino-acid polypeptide reads, in one-letter code: Release factor glutamine methyltransferase (285 aa).

S-adenosyl-L-methionine-binding positions include 119-123 (GTGSG), Glu-142, Trp-175, and Asn-191. 191-194 (NPPY) is a binding site for substrate.

It belongs to the protein N5-glutamine methyltransferase family. PrmC subfamily.

The catalysed reaction is L-glutaminyl-[peptide chain release factor] + S-adenosyl-L-methionine = N(5)-methyl-L-glutaminyl-[peptide chain release factor] + S-adenosyl-L-homocysteine + H(+). In terms of biological role, methylates the class 1 translation termination release factors RF1/PrfA and RF2/PrfB on the glutamine residue of the universally conserved GGQ motif. This chain is Release factor glutamine methyltransferase, found in Burkholderia pseudomallei (strain K96243).